A 498-amino-acid polypeptide reads, in one-letter code: Zinc finger protein 682 (498 aa).

The KRAB domain maps to 4–75 (LTFRDVTIEF…KRHETIAKPP (72 aa)). 10 C2H2-type zinc fingers span residues 173–195 (FKCM…KIIH), 201–223 (CICE…KRIH), 229–251 (YKCE…KRIH), 257–279 (YKCE…KKIH), 285–307 (YTCE…KTIH), 313–335 (YKCK…ERTH), 341–363 (YKCE…KVIH), 369–391 (YKCE…KRIH), 397–419 (YKCE…KRIH), and 425–447 (YNCE…KKIH). The C2H2-type 11; degenerate zinc-finger motif lies at 453–475 (YKCEECGKAFKRCSHLNEHKRVQ).

Belongs to the krueppel C2H2-type zinc-finger protein family.

Its subcellular location is the nucleus. Functionally, may be involved in transcriptional regulation. The chain is Zinc finger protein 682 (ZNF682) from Homo sapiens (Human).